A 379-amino-acid polypeptide reads, in one-letter code: tRNA(Met) cytidine acetate ligase (379 aa).

ATP-binding positions include 7–20, Gly100, Asn153, and Arg178; that span reads ITEY…HQYH.

This sequence belongs to the TmcAL family.

Its subcellular location is the cytoplasm. It carries out the reaction cytidine(34) in elongator tRNA(Met) + acetate + ATP = N(4)-acetylcytidine(34) in elongator tRNA(Met) + AMP + diphosphate. Its function is as follows. Catalyzes the formation of N(4)-acetylcytidine (ac(4)C) at the wobble position of elongator tRNA(Met), using acetate and ATP as substrates. First activates an acetate ion to form acetyladenylate (Ac-AMP) and then transfers the acetyl group to tRNA to form ac(4)C34. This chain is tRNA(Met) cytidine acetate ligase, found in Staphylococcus aureus (strain MRSA252).